The following is a 330-amino-acid chain: Catharanthine synthase (330 aa).

Residues 81–83 carry the Involved in the stabilization of the negatively charged intermediate by the formation of the oxyanion hole motif; that stretch reads HGA. Catharanthine is bound at residue G84. The Proton acceptor role is filled by S173. Residue D274 is part of the active site. Catharanthine is bound at residue Y305. The active-site Proton donor/acceptor is Y305.

The protein belongs to the 'GDXG' lipolytic enzyme family. Interacts with dehydroprecondylocarpine acetate synthase (DPAS). In terms of tissue distribution, expressed in leaf epidermis.

It is found in the cytoplasm. The protein localises to the cytosol. The protein resides in the nucleus. It carries out the reaction dehydrosecodine = catharanthine. It participates in alkaloid biosynthesis. Component of iboga and aspidosperma monoterpenoid indole alkaloids (MIAs, e.g. tabersonine and catharanthine) biosynthesis pathway from 19E-geissoschizine, psychoactive compounds likely to be used in the treatment of opioid dependence. Catalyzes the conversion of dehydrosecodine to catharanthine. This is Catharanthine synthase from Catharanthus roseus (Madagascar periwinkle).